We begin with the raw amino-acid sequence, 100 residues long: Large ribosomal subunit protein bL21 (100 aa).

It belongs to the bacterial ribosomal protein bL21 family. In terms of assembly, part of the 50S ribosomal subunit. Contacts protein L20.

This protein binds to 23S rRNA in the presence of protein L20. This is Large ribosomal subunit protein bL21 from Mycoplasmoides gallisepticum (strain R(low / passage 15 / clone 2)) (Mycoplasma gallisepticum).